A 105-amino-acid chain; its full sequence is Integration host factor subunit beta (105 aa).

This sequence belongs to the bacterial histone-like protein family. Heterodimer of an alpha and a beta chain.

In terms of biological role, this protein is one of the two subunits of integration host factor, a specific DNA-binding protein that functions in genetic recombination as well as in transcriptional and translational control. In Nitrosomonas europaea (strain ATCC 19718 / CIP 103999 / KCTC 2705 / NBRC 14298), this protein is Integration host factor subunit beta.